The chain runs to 651 residues: Peptidoglycan D,D-transpeptidase MrdA (651 aa).

A helical membrane pass occupies residues leucine 30 to leucine 50. Serine 338 acts as the Acyl-ester intermediate in catalysis.

Belongs to the transpeptidase family. MrdA subfamily.

It is found in the cell inner membrane. It catalyses the reaction Preferential cleavage: (Ac)2-L-Lys-D-Ala-|-D-Ala. Also transpeptidation of peptidyl-alanyl moieties that are N-acyl substituents of D-alanine.. The protein operates within cell wall biogenesis; peptidoglycan biosynthesis. Its function is as follows. Catalyzes cross-linking of the peptidoglycan cell wall. This Haemophilus influenzae (strain ATCC 51907 / DSM 11121 / KW20 / Rd) protein is Peptidoglycan D,D-transpeptidase MrdA.